Reading from the N-terminus, the 324-residue chain is tRNA pseudouridine synthase B (324 aa).

The active-site Nucleophile is the Asp49.

This sequence belongs to the pseudouridine synthase TruB family. Type 1 subfamily.

The catalysed reaction is uridine(55) in tRNA = pseudouridine(55) in tRNA. Functionally, responsible for synthesis of pseudouridine from uracil-55 in the psi GC loop of transfer RNAs. In Tolumonas auensis (strain DSM 9187 / NBRC 110442 / TA 4), this protein is tRNA pseudouridine synthase B.